We begin with the raw amino-acid sequence, 454 residues long: Nucleoprotein (454 aa).

Residues 1-62 are disordered; the sequence is MSFVPGQENA…ATTQPNTGSV (62 aa). A compositionally biased stretch (low complexity) spans 9–23; the sequence is NAGSRSSSGNRAGNG. The span at 49–61 shows a compositional bias: polar residues; sequence PKQTATTQPNTGS. Positions 56-197 are RNA-binding; sequence QPNTGSVVPH…GFYVEGSGRS (142 aa). The CoV N NTD domain occupies 64–193; it reads PHYSWFSGIT…VLPQGFYVEG (130 aa). RNA contacts are provided by Arg-109, Arg-125, and Arg-167. Ser-170 is modified (phosphoserine; by host). The residue at position 177 (Thr-177) is a Phosphothreonine; by host. 3 disordered regions span residues 186–230, 271–290, and 383–428; these read PQGF…STVK, PRQK…FGKR, and AGGA…SREL. Residues 193–212 are compositionally biased toward low complexity; that stretch reads GSGRSAPASRSGSRSQSRGP. Ser-194 bears the Phosphoserine; by host mark. Residues 215–227 are compositionally biased toward polar residues; the sequence is RARSSSNQRQPAS. Positions 260–383 constitute a CoV N CTD domain; it reads AKEVRQKILN…ENLNAYQNQA (124 aa). Positions 267 to 384 are dimerization; the sequence is ILNKPRQKRT…NLNAYQNQAG (118 aa). Phosphoserine; by host occurs at positions 390 and 425. Thr-429 carries the post-translational modification Phosphothreonine; by host.

Belongs to the betacoronavirus nucleocapsid protein family. As to quaternary structure, homooligomer. Both monomeric and oligomeric forms interact with RNA. Interacts with protein M. Interacts with NSP3; this interaction serves to tether the genome to the newly translated replicase-transcriptase complex at a very early stage of infection. ADP-ribosylated. The ADP-ribosylation is retained in the virion during infection. Post-translationally, phosphorylated on serine and threonine residues.

The protein localises to the virion. It localises to the host endoplasmic reticulum-Golgi intermediate compartment. It is found in the host Golgi apparatus. Packages the positive strand viral genome RNA into a helical ribonucleocapsid (RNP) and plays a fundamental role during virion assembly through its interactions with the viral genome and membrane protein M. Plays an important role in enhancing the efficiency of subgenomic viral RNA transcription as well as viral replication. In Rattus norvegicus (Rat), this protein is Nucleoprotein.